A 339-amino-acid polypeptide reads, in one-letter code: Ketol-acid reductoisomerase (NADP(+)) (339 aa).

Positions 1–182 (MRVYYDSDAD…GGGRAGIIET (182 aa)) constitute a KARI N-terminal Rossmann domain. Residues 24-27 (YGSQ), Arg48, Ser51, and 83-86 (DEGQ) each bind NADP(+). His108 is an active-site residue. Gly134 provides a ligand contact to NADP(+). A KARI C-terminal knotted domain is found at 183–328 (TFKEECETDL…EKLRAMMPWI (146 aa)). Mg(2+) is bound by residues Asp191, Glu195, Glu227, and Glu231. A substrate-binding site is contributed by Ser252.

It belongs to the ketol-acid reductoisomerase family. Requires Mg(2+) as cofactor.

The enzyme catalyses (2R)-2,3-dihydroxy-3-methylbutanoate + NADP(+) = (2S)-2-acetolactate + NADPH + H(+). The catalysed reaction is (2R,3R)-2,3-dihydroxy-3-methylpentanoate + NADP(+) = (S)-2-ethyl-2-hydroxy-3-oxobutanoate + NADPH + H(+). It functions in the pathway amino-acid biosynthesis; L-isoleucine biosynthesis; L-isoleucine from 2-oxobutanoate: step 2/4. It participates in amino-acid biosynthesis; L-valine biosynthesis; L-valine from pyruvate: step 2/4. Its function is as follows. Involved in the biosynthesis of branched-chain amino acids (BCAA). Catalyzes an alkyl-migration followed by a ketol-acid reduction of (S)-2-acetolactate (S2AL) to yield (R)-2,3-dihydroxy-isovalerate. In the isomerase reaction, S2AL is rearranged via a Mg-dependent methyl migration to produce 3-hydroxy-3-methyl-2-ketobutyrate (HMKB). In the reductase reaction, this 2-ketoacid undergoes a metal-dependent reduction by NADPH to yield (R)-2,3-dihydroxy-isovalerate. The chain is Ketol-acid reductoisomerase (NADP(+)) from Acidiphilium cryptum (strain JF-5).